Here is a 349-residue protein sequence, read N- to C-terminus: Phosphoribosylformylglycinamidine cyclo-ligase (349 aa).

Belongs to the AIR synthase family.

It localises to the cytoplasm. The catalysed reaction is 2-formamido-N(1)-(5-O-phospho-beta-D-ribosyl)acetamidine + ATP = 5-amino-1-(5-phospho-beta-D-ribosyl)imidazole + ADP + phosphate + H(+). Its pathway is purine metabolism; IMP biosynthesis via de novo pathway; 5-amino-1-(5-phospho-D-ribosyl)imidazole from N(2)-formyl-N(1)-(5-phospho-D-ribosyl)glycinamide: step 2/2. The chain is Phosphoribosylformylglycinamidine cyclo-ligase from Lactobacillus delbrueckii subsp. bulgaricus (strain ATCC BAA-365 / Lb-18).